The chain runs to 62 residues: Large ribosomal subunit protein eL24 (62 aa).

Cys6, Cys9, Cys32, and Cys36 together coordinate Zn(2+). The C4-type zinc-finger motif lies at 6 to 36; the sequence is CYFCGKMLEPGTGKLYVKKDGSTYFMCSSKC.

It belongs to the eukaryotic ribosomal protein eL24 family. In terms of assembly, part of the 50S ribosomal subunit. Forms a cluster with proteins L3 and L14. Requires Zn(2+) as cofactor.

Functionally, binds to the 23S rRNA. In Methanosarcina acetivorans (strain ATCC 35395 / DSM 2834 / JCM 12185 / C2A), this protein is Large ribosomal subunit protein eL24.